The sequence spans 172 residues: Centrin-2 (172 aa).

Residues methionine 1–alanine 14 are compositionally biased toward polar residues. Positions methionine 1–glutamine 31 are disordered. Position 2 is an N-acetylalanine (alanine 2). A required for self-assembly region spans residues alanine 2 to leucine 25. Serine 20 is modified (phosphoserine). Residue lysine 22 forms a Glycyl lysine isopeptide (Lys-Gly) (interchain with G-Cter in SUMO2) linkage. Threonine 26 carries the phosphothreonine modification. EF-hand domains lie at aspartate 28–glutamate 63, proline 64–glutamate 99, aspartate 101–asparagine 136, and leucine 137–tyrosine 172. Aspartate 41, aspartate 43, threonine 45, threonine 47, and glutamate 52 together coordinate Ca(2+). 5 residues coordinate Ca(2+): aspartate 150, aspartate 152, aspartate 154, glutamate 156, and glutamate 161.

It belongs to the centrin family. Monomer. Homooligomer. Interacts with CCP110, SFI1. Component of the XPC complex composed of XPC, RAD23B and CETN2. Component of the nuclear pore complex (NPC)-associated TREX-2 complex (transcription and export complex 2), composed of at least GANP, 2 copies of ENY2, PCID2, SEM1/DSS1, and either centrin CETN2 or centrin CETN3. The TREX-2 complex also associates with ALYREF/ALY and with the nucleoporin NUP153. Interacts with USP49. Forms a microtubule-associated complex with POC5, POC1B and FAM161A. Interacts with CCDC15. In terms of tissue distribution, ubiquitously expressed in all adult tissues tested, with strongest expression in brain, spleen, kidney, small intestine and ovary. Also expressed in the NIH 3T3 fibroblast cell line and peripheral blood lymphocytes.

It is found in the cytoplasm. Its subcellular location is the cytoskeleton. It localises to the microtubule organizing center. The protein localises to the centrosome. The protein resides in the centriole. It is found in the nucleus. Its subcellular location is the nucleus envelope. It localises to the nuclear pore complex. Its function is as follows. Plays a fundamental role in microtubule organizing center structure and function. Required for centriole duplication and correct spindle formation. Has a role in regulating cytokinesis and genome stability via cooperation with CALM1 and CCP110. Involved in global genome nucleotide excision repair (GG-NER) by acting as component of the XPC complex. Cooperatively with Rad23b appears to stabilize Xpc. In vitro, stimulates DNA binding of the Xpc:Rad23b dimer. In terms of biological role, the XPC complex is proposed to represent the first factor bound at the sites of DNA damage and together with other core recognition factors, Xpa, RPA and the TFIIH complex, is part of the pre-incision (or initial recognition) complex. The XPC complex recognizes a wide spectrum of damaged DNA characterized by distortions of the DNA helix such as single-stranded loops, mismatched bubbles or single-stranded overhangs. The orientation of XPC complex binding appears to be crucial for inducing a productive NER. XPC complex is proposed to recognize and to interact with unpaired bases on the undamaged DNA strand which is followed by recruitment of the TFIIH complex and subsequent scanning for lesions in the opposite strand in a 5'-to-3' direction by the NER machinery. Cyclobutane pyrimidine dimers (CPDs) which are formed upon UV-induced DNA damage esacpe detection by the XPC complex due to a low degree of structural perurbation. Instead they are detected by the UV-DDB complex which in turn recruits and cooperates with the XPC complex in the respective DNA repair. Functionally, as a component of the TREX-2 complex, involved in the export of mRNAs to the cytoplasm through the nuclear pores. The sequence is that of Centrin-2 (Cetn2) from Mus musculus (Mouse).